We begin with the raw amino-acid sequence, 185 residues long: Transcription termination/antitermination protein NusG (185 aa).

Residues 134–162 (PGQMVRVIDGPFNDFDGLVEEVNYEKNRL) form the KOW domain.

It belongs to the NusG family.

Functionally, participates in transcription elongation, termination and antitermination. This is Transcription termination/antitermination protein NusG from Xylella fastidiosa (strain Temecula1 / ATCC 700964).